The chain runs to 448 residues: MGLSPVNIFKPFGLGRAKAVIAAVSGGSDSLGLLFLLKDYLSTLESPPVLIAVTVDHKLRAESALEAENVGLLCQKHGIMHCVLSWDDPKPAHGLAAAARTARYRLLVQAARDAGAGFIVTGHTENDQIETFLMRKARSGHCEARGLAAMSPRSLLEGSVELARPLLTVSRQALRDELTRRGIAWVDDPSNANIDYERPRVRLGVAAEADGQEVLEQIAQAGAARERDNAALVEALADPATLGVDAAGMMFLNADCYAALSPGARQLFSGLLASIAGGRRFLPGDGERRRIERMLSGQDAPRRLTVFGALIERGEKGAPHRFRRERRNLPKLDLVPGQHIVWDGRFCFFNSGGRSFEIAPPGRQELIDFLKNSGRDIESRRCEALLISPALYEGGKLAFVPFLPGAEWPQGVHIERHFAIFDHVLPGHDFALAQAVEARLGRACAEIS.

ATP is bound at residue 25–30 (SGGSDS).

Belongs to the tRNA(Ile)-lysidine synthase family.

The protein resides in the cytoplasm. It catalyses the reaction cytidine(34) in tRNA(Ile2) + L-lysine + ATP = lysidine(34) in tRNA(Ile2) + AMP + diphosphate + H(+). Ligates lysine onto the cytidine present at position 34 of the AUA codon-specific tRNA(Ile) that contains the anticodon CAU, in an ATP-dependent manner. Cytidine is converted to lysidine, thus changing the amino acid specificity of the tRNA from methionine to isoleucine. This Brucella abortus (strain S19) protein is tRNA(Ile)-lysidine synthase.